The chain runs to 159 residues: Probable histone H2A.5 (159 aa).

Over residues 1 to 10 (MDAAGAGAGG) the composition is skewed to gly residues. 2 disordered regions span residues 1 to 29 (MDAA…KKAV) and 136 to 159 (EKAA…PKKA). 2 stretches are compositionally biased toward basic residues: residues 11–29 (KLKK…KKAV) and 148–159 (PKKAAGKSPKKA). 2 short sequence motifs (SPKK motif) span residues 147 to 150 (SPKK) and 155 to 158 (SPKK).

The protein belongs to the histone H2A family. In terms of assembly, the nucleosome is a histone octamer containing two molecules each of H2A, H2B, H3 and H4 assembled in one H3-H4 heterotetramer and two H2A-H2B heterodimers. The octamer wraps approximately 147 bp of DNA.

It localises to the nucleus. The protein resides in the chromosome. Functionally, core component of nucleosome. Nucleosomes wrap and compact DNA into chromatin, limiting DNA accessibility to the cellular machineries which require DNA as a template. Histones thereby play a central role in transcription regulation, DNA repair, DNA replication and chromosomal stability. DNA accessibility is regulated via a complex set of post-translational modifications of histones, also called histone code, and nucleosome remodeling. In Oryza sativa subsp. indica (Rice), this protein is Probable histone H2A.5.